A 1544-amino-acid polypeptide reads, in one-letter code: Protein mahjong (1544 aa).

The interval 1–110 (MSEGSGSENA…AAADRRQATK (110 aa)) is disordered. The segment covering 10–35 (AAAAEAAAEAEAATEAALMAEAVAVA) has biased composition (low complexity). The span at 38 to 91 (SDEEEQPEAEDMPEQAGDNQEEDAAEQQDGGEPEADEDADADDAMSVENAENES) shows a compositional bias: acidic residues. Residues Ser565 and Ser569 each carry the phosphoserine modification. The LisH domain occupies 912 to 944 (NKQQLYQLIFEHLESNGLSQTAQMLQREVGLPL). 2 disordered regions span residues 946-973 (TPTT…SRNR) and 987-1059 (GNGD…LAED). A Phosphoserine modification is found at Ser955. Positions 961–971 (SLPSGSSSLSR) are enriched in low complexity. Over residues 1016–1027 (PNFSSLNTTQTP) the composition is skewed to polar residues. 2 consecutive short sequence motifs (DWD box) follow at residues 1302-1309 (VLWDVRSG) and 1338-1345 (EVWDLRTF). Disordered regions lie at residues 1447–1475 (KSER…ENTF) and 1487–1544 (LRNL…SSDD). Composition is skewed to acidic residues over residues 1451–1467 (SEEE…EDGS) and 1495–1535 (NDDE…DVLE).

It belongs to the VPRBP/DCAF1 family. In terms of assembly, component of the CUL4-RBX1-DDB1-DCAF1 E3 ubiquitin-protein ligase complex. Interacts with l(2)gl.

Its subcellular location is the nucleus. It participates in protein modification; protein ubiquitination. Probable substrate recognition component of tsome E3 ubiquitin-protein ligase complex. Plays a key role in cell competition via its interaction with l(2)gl. This Drosophila melanogaster (Fruit fly) protein is Protein mahjong (mahj).